The following is a 313-amino-acid chain: uncharacterized protein (313 aa).

This is an uncharacterized protein from Acanthamoeba polyphaga mimivirus (APMV).